Reading from the N-terminus, the 140-residue chain is Thioredoxin H9 (140 aa).

Gly-2 carries N-myristoyl glycine lipidation. Cys-4 is lipidated: S-palmitoyl cysteine. Residue Ser-14 is modified to Phosphoserine. A Thioredoxin domain is found at 25-129; that stretch reads VHLITTKESW…PELQKKVTSI (105 aa). Residues Cys-57 and Cys-60 each act as nucleophile in the active site. Cys-57 and Cys-60 form a disulfide bridge. Ser-136 is modified (phosphoserine).

The protein belongs to the thioredoxin family. Plant H-type subfamily. In terms of tissue distribution, ubiquitous.

The protein resides in the cell membrane. Probable thiol-disulfide oxidoreductase that may play a role in intercellular communication due to its ability to move from cell to cell. The sequence is that of Thioredoxin H9 (TRX9) from Arabidopsis thaliana (Mouse-ear cress).